A 119-amino-acid chain; its full sequence is Large ribosomal subunit protein uL18 (119 aa).

The protein belongs to the universal ribosomal protein uL18 family. As to quaternary structure, part of the 50S ribosomal subunit; part of the 5S rRNA/L5/L18/L25 subcomplex. Contacts the 5S and 23S rRNAs.

Its function is as follows. This is one of the proteins that bind and probably mediate the attachment of the 5S RNA into the large ribosomal subunit, where it forms part of the central protuberance. The protein is Large ribosomal subunit protein uL18 of Borrelia duttonii (strain Ly).